The following is an 833-amino-acid chain: 3-hydroxy-3-methylglutaryl-coenzyme A reductase (833 aa).

4 helical membrane-spanning segments follow: residues 10-32 (FCARHQWEVIVATLALLACAASV), 91-117 (YLLIIAGVFSTFASFIFTSAVASLFWS), 160-180 (LALLGPTATLDTLLAVLLVGV), and 301-321 (SADYIVIATLLCALIIKFVFF). Positions 322-419 (EEQRNWVIDM…EEVVMLVEQS (98 aa)) are linker. Residues 347 to 374 (KPKFSVGDDSNSEVSTQTEGVLEDEWPT) form a disordered region. A compositionally biased stretch (polar residues) spans 354-365 (DDSNSEVSTQTE). The segment at 420–833 (HIPLHRLEAV…ENITLKVPTL (414 aa)) is catalytic. Residues glutamate 504 and lysine 635 each act as charge relay system in the active site. The N-linked (GlcNAc...) asparagine glycan is linked to asparagine 680. Catalysis depends on aspartate 711, which acts as the Charge relay system. 2 N-linked (GlcNAc...) asparagine glycosylation sites follow: asparagine 715 and asparagine 720. The Proton donor role is filled by histidine 809. Residues asparagine 813 and asparagine 825 are each glycosylated (N-linked (GlcNAc...) asparagine).

Belongs to the HMG-CoA reductase family.

It is found in the endoplasmic reticulum membrane. The catalysed reaction is (R)-mevalonate + 2 NADP(+) + CoA = (3S)-3-hydroxy-3-methylglutaryl-CoA + 2 NADPH + 2 H(+). Its pathway is metabolic intermediate biosynthesis; (R)-mevalonate biosynthesis; (R)-mevalonate from acetyl-CoA: step 3/3. Its activity is regulated as follows. The activity of HMG-CoA-reductase is suppressed by exogenous mevalonate. Functionally, synthesis of mevalonate for the production of non-sterol isoprenoids, which are essential for growth differentiation. This Agrotis ipsilon (Black cutworm moth) protein is 3-hydroxy-3-methylglutaryl-coenzyme A reductase (HMGR).